A 670-amino-acid chain; its full sequence is AAAQRRQNDSSVFLAIMVAAAVESESSLTDGDAGALLLQDISEWDEVFRFDRLEAVERAAHAAAAAAFGAFVARGDWTASAAAAFQAAGKQIAFMAAFSTVAGAKGSATVRDADAFAAKFASAAALQELVGNNSPISFFIFDLLFAAILFASKAKAANQAAFAAAAELAAESLFVRLPSLHQVSFFALAGFAAVAAHRHMNGYGSHTFKLVAKDGSVYCSKFWYKADQGQAAEVWKDAEEVAAEDVDYFRDLNFQAEAAGRYPLWELASQVMTFSDFEIDPFNENIPTKVVPRESVPLIVDAELLLNRNPLNMFAEVEQVFMDVAAASKGADEVEDPLIQRQFAYIDTHLSELTASYGIPVCRPYATVLNDQEDGARYDDVQDVLVIAPNAFSASAVEVQIPAAAAFNLAAARVAAAGDVRVNAVVEADQRKQSRQFWASDVNAQKKRLVDAFRMEVASAVSASIQVDVTVEFSFVAAAAAARIAAAVGSAAAGALANRRQIKVIASLAVLAKADAKVRQKNALESSSQAVAVDAKAAAQDIVDSSDAANVVTVAREFAVLPQTAAADAAEFVAAASAKAFSSFPAMEVISVAAAAGAVAEPARASLDLNMAMFFSRIVASRGAAANAIAALVKASRDGVFVAAVLAKAAANNRAAEAIFKFEVRQAVDA.

Active-site residues include histidine 61 and asparagine 132. Tyrosine 345 is a heme binding site.

It belongs to the catalase family. Homotetramer. Heme serves as cofactor.

It is found in the peroxisome matrix. The catalysed reaction is 2 H2O2 = O2 + 2 H2O. In terms of biological role, catalyzes the degradation of hydrogen peroxide (H(2)O(2)) generated by peroxisomal oxidases to water and oxygen, thereby protecting cells from the toxic effects of hydrogen peroxide. The chain is Catalase from Penicillium janthinellum (Penicillium vitale).